A 237-amino-acid chain; its full sequence is Ribosomal RNA small subunit methyltransferase G (237 aa).

S-adenosyl-L-methionine-binding positions include Gly78, Phe83, 129–130 (AE), and Arg148. Residues 216-237 (SKKKETPNKYPRKAGTPNKKPL) are disordered.

This sequence belongs to the methyltransferase superfamily. RNA methyltransferase RsmG family.

The protein resides in the cytoplasm. Functionally, specifically methylates the N7 position of a guanine in 16S rRNA. The chain is Ribosomal RNA small subunit methyltransferase G from Streptococcus agalactiae serotype Ia (strain ATCC 27591 / A909 / CDC SS700).